We begin with the raw amino-acid sequence, 357 residues long: S-adenosyl-L-methionine:benzoic acid/salicylic acid carboxyl methyltransferase 2 (357 aa).

S-adenosyl-L-homocysteine is bound at residue Tyr-18. Residue Gln-25 participates in benzoate binding. Residues Cys-59, Asn-64, Asp-96, Leu-97, Ser-135, and Phe-136 each contribute to the S-adenosyl-L-homocysteine site. Trp-157 is a binding site for benzoate. Residues Asn-168, Asp-254, Phe-256, and Asn-257 each coordinate Mg(2+). Gln-260 lines the benzoate pocket.

It belongs to the methyltransferase superfamily. Type-7 methyltransferase family. In terms of tissue distribution, predominantly expressed in petal limbs and tubes of corollas.

The enzyme catalyses benzoate + S-adenosyl-L-methionine = methyl benzoate + S-adenosyl-L-homocysteine. The catalysed reaction is salicylate + S-adenosyl-L-methionine = methyl salicylate + S-adenosyl-L-homocysteine. It participates in aromatic compound metabolism. Converts benzoic acid into the volatile ester methyl benzoates. This scent, mostly produced in a rhythmical, diurnal manner, attracts the pollinators. In Petunia hybrida (Petunia), this protein is S-adenosyl-L-methionine:benzoic acid/salicylic acid carboxyl methyltransferase 2.